The following is a 315-amino-acid chain: Phosphomutase-like protein 3 (315 aa).

The signal sequence occupies residues 1 to 19 (MQQFLTLGALWTLFNVATT). The active-site Tele-phosphohistidine intermediate is H77. N88 and N154 each carry an N-linked (GlcNAc...) asparagine glycan. E173 acts as the Proton donor/acceptor in catalysis. N185 is a glycosylation site (N-linked (GlcNAc...) asparagine). N286 carries the GPI-anchor amidated asparagine lipid modification. Positions 287–315 (DAWDTFKDWCPNPPASISGTATSTATGSA) are cleaved as a propeptide — removed in mature form.

It belongs to the phosphoglycerate mutase family.

Its subcellular location is the cell membrane. The polypeptide is Phosphomutase-like protein 3 (PGA12) (Candida albicans (strain SC5314 / ATCC MYA-2876) (Yeast)).